The primary structure comprises 603 residues: Elongation factor 4 (603 aa).

The tr-type G domain maps to Val7–Pro189. GTP contacts are provided by residues Asp19–Thr24 and Asn136–Asp139.

It belongs to the TRAFAC class translation factor GTPase superfamily. Classic translation factor GTPase family. LepA subfamily.

The protein resides in the cell inner membrane. It carries out the reaction GTP + H2O = GDP + phosphate + H(+). In terms of biological role, required for accurate and efficient protein synthesis under certain stress conditions. May act as a fidelity factor of the translation reaction, by catalyzing a one-codon backward translocation of tRNAs on improperly translocated ribosomes. Back-translocation proceeds from a post-translocation (POST) complex to a pre-translocation (PRE) complex, thus giving elongation factor G a second chance to translocate the tRNAs correctly. Binds to ribosomes in a GTP-dependent manner. This Nostoc sp. (strain PCC 7120 / SAG 25.82 / UTEX 2576) protein is Elongation factor 4.